The sequence spans 197 residues: ATP-dependent Clp protease proteolytic subunit 1 (197 aa).

The active-site Nucleophile is the Ser-96. The active site involves His-121.

The protein belongs to the peptidase S14 family. Fourteen ClpP subunits assemble into 2 heptameric rings which stack back to back to give a disk-like structure with a central cavity, resembling the structure of eukaryotic proteasomes.

Its subcellular location is the cytoplasm. It carries out the reaction Hydrolysis of proteins to small peptides in the presence of ATP and magnesium. alpha-casein is the usual test substrate. In the absence of ATP, only oligopeptides shorter than five residues are hydrolyzed (such as succinyl-Leu-Tyr-|-NHMec, and Leu-Tyr-Leu-|-Tyr-Trp, in which cleavage of the -Tyr-|-Leu- and -Tyr-|-Trp bonds also occurs).. Its function is as follows. Cleaves peptides in various proteins in a process that requires ATP hydrolysis. Has a chymotrypsin-like activity. Plays a major role in the degradation of misfolded proteins. This is ATP-dependent Clp protease proteolytic subunit 1 from Synechococcus sp. (strain ATCC 27144 / PCC 6301 / SAUG 1402/1) (Anacystis nidulans).